Here is an 87-residue protein sequence, read N- to C-terminus: U3-theraphotoxin-Hhn1l (87 aa).

Positions 1–24 (MVNMKASMFLTFAGLVLLFVVCYA) are cleaved as a signal peptide. Positions 25 to 52 (SESEEKEFPKEMLSSIFAVDNDFKQEER) are excised as a propeptide. Intrachain disulfides connect Cys54–Cys67, Cys61–Cys72, and Cys66–Cys79.

The protein belongs to the neurotoxin 10 (Hwtx-1) family. 51 (Hntx-8) subfamily. Hntx-8 sub-subfamily. Expressed by the venom gland.

The protein resides in the secreted. Its function is as follows. Ion channel inhibitor. The chain is U3-theraphotoxin-Hhn1l from Cyriopagopus hainanus (Chinese bird spider).